The sequence spans 416 residues: E3 ubiquitin-protein ligase RNFT1 (416 aa).

Residues 27–45 (QSSSGHTHHQPGSNDSPSV) show a composition bias toward polar residues. Disordered regions lie at residues 27 to 50 (QSSS…MSLP) and 63 to 116 (GDVT…ADSR). Positions 77–86 (GARSSSRRVR) are enriched in basic residues. 6 helical membrane-spanning segments follow: residues 146–166 (LVVQ…TFLY), 184–204 (LQCL…YYTF), 214–234 (VFMN…VVGI), 237–257 (FIGK…PSFV), 265–287 (YWYM…PVWF), and 302–322 (WHFG…IIFG). The segment at 349–400 (CSEVDGMCAICQAEFIKPIVLVCQHVFCEECISLWFNKEKTCPLCRTVISNQ) is required for ubiquitin ligase activity and for protection against ER stress-induced cell death. The segment at 356–394 (CAICQAEFIKPIVLVCQHVFCEECISLWFNKEKTCPLCR) adopts an RING-type zinc-finger fold.

The protein resides in the endoplasmic reticulum membrane. It catalyses the reaction S-ubiquitinyl-[E2 ubiquitin-conjugating enzyme]-L-cysteine + [acceptor protein]-L-lysine = [E2 ubiquitin-conjugating enzyme]-L-cysteine + N(6)-ubiquitinyl-[acceptor protein]-L-lysine.. The protein operates within protein modification; protein ubiquitination. Functionally, E3 ubiquitin-protein ligase that acts in the endoplasmic reticulum (ER)-associated degradation (ERAD) pathway, which targets misfolded proteins that accumulate in the endoplasmic reticulum (ER) for ubiquitination and subsequent proteasome-mediated degradation. Protects cells from ER stress-induced apoptosis. The chain is E3 ubiquitin-protein ligase RNFT1 (rnft1) from Xenopus tropicalis (Western clawed frog).